Here is a 712-residue protein sequence, read N- to C-terminus: UvrABC system protein B (712 aa).

The 387-residue stretch at 35 to 421 folds into the Helicase ATP-binding domain; sequence RRVQAGEKDV…SDGAVEQIIR (387 aa). 48 to 55 contacts ATP; sequence GATGTGKS. The Beta-hairpin signature appears at 101 to 124; that stretch reads YYDYYQPEAYVPQSDTYIEKDSSI. Residues 438-604 enclose the Helicase C-terminal domain; it reads QIDDLVHEIR…PLRKKINDIV (167 aa). Residues 625–655 form a disordered region; it reads TKEGKGAKAPVPALGGQKTGGAKAARGRAKE. A UVR domain is found at 667–702; sequence AEQIEDLTTRMRAAAADLQFEIAARLRDEVSEMKKE.

Belongs to the UvrB family. Forms a heterotetramer with UvrA during the search for lesions. Interacts with UvrC in an incision complex.

The protein resides in the cytoplasm. Its function is as follows. The UvrABC repair system catalyzes the recognition and processing of DNA lesions. A damage recognition complex composed of 2 UvrA and 2 UvrB subunits scans DNA for abnormalities. Upon binding of the UvrA(2)B(2) complex to a putative damaged site, the DNA wraps around one UvrB monomer. DNA wrap is dependent on ATP binding by UvrB and probably causes local melting of the DNA helix, facilitating insertion of UvrB beta-hairpin between the DNA strands. Then UvrB probes one DNA strand for the presence of a lesion. If a lesion is found the UvrA subunits dissociate and the UvrB-DNA preincision complex is formed. This complex is subsequently bound by UvrC and the second UvrB is released. If no lesion is found, the DNA wraps around the other UvrB subunit that will check the other stand for damage. This is UvrABC system protein B from Streptomyces coelicolor (strain ATCC BAA-471 / A3(2) / M145).